A 110-amino-acid chain; its full sequence is Large ribosomal subunit protein uL22 (110 aa).

This sequence belongs to the universal ribosomal protein uL22 family. Part of the 50S ribosomal subunit.

Functionally, this protein binds specifically to 23S rRNA; its binding is stimulated by other ribosomal proteins, e.g. L4, L17, and L20. It is important during the early stages of 50S assembly. It makes multiple contacts with different domains of the 23S rRNA in the assembled 50S subunit and ribosome. The globular domain of the protein is located near the polypeptide exit tunnel on the outside of the subunit, while an extended beta-hairpin is found that lines the wall of the exit tunnel in the center of the 70S ribosome. The protein is Large ribosomal subunit protein uL22 of Marinobacter nauticus (strain ATCC 700491 / DSM 11845 / VT8) (Marinobacter aquaeolei).